Here is a 75-residue protein sequence, read N- to C-terminus: UPF0352 protein ETA_12580 (75 aa).

Belongs to the UPF0352 family.

The polypeptide is UPF0352 protein ETA_12580 (Erwinia tasmaniensis (strain DSM 17950 / CFBP 7177 / CIP 109463 / NCPPB 4357 / Et1/99)).